The following is a 717-amino-acid chain: Fatty acid oxidation complex subunit alpha (717 aa).

Positions methionine 1–serine 190 are enoyl-CoA hydratase/isomerase. Position 298 (aspartate 298) interacts with substrate. The segment at histidine 313–glycine 717 is 3-hydroxyacyl-CoA dehydrogenase. NAD(+) contacts are provided by residues methionine 326, aspartate 345, valine 402 to glutamate 404, lysine 409, and serine 431. Residue histidine 452 is the For 3-hydroxyacyl-CoA dehydrogenase activity of the active site. Residue asparagine 455 coordinates NAD(+). Asparagine 502 contributes to the substrate binding site.

This sequence in the N-terminal section; belongs to the enoyl-CoA hydratase/isomerase family. In the C-terminal section; belongs to the 3-hydroxyacyl-CoA dehydrogenase family. Heterotetramer of two alpha chains (FadB) and two beta chains (FadA).

It carries out the reaction a (3S)-3-hydroxyacyl-CoA + NAD(+) = a 3-oxoacyl-CoA + NADH + H(+). It catalyses the reaction a (3S)-3-hydroxyacyl-CoA = a (2E)-enoyl-CoA + H2O. The catalysed reaction is a 4-saturated-(3S)-3-hydroxyacyl-CoA = a (3E)-enoyl-CoA + H2O. The enzyme catalyses (3S)-3-hydroxybutanoyl-CoA = (3R)-3-hydroxybutanoyl-CoA. It carries out the reaction a (3Z)-enoyl-CoA = a 4-saturated (2E)-enoyl-CoA. It catalyses the reaction a (3E)-enoyl-CoA = a 4-saturated (2E)-enoyl-CoA. It participates in lipid metabolism; fatty acid beta-oxidation. Its function is as follows. Involved in the aerobic and anaerobic degradation of long-chain fatty acids via beta-oxidation cycle. Catalyzes the formation of 3-oxoacyl-CoA from enoyl-CoA via L-3-hydroxyacyl-CoA. It can also use D-3-hydroxyacyl-CoA and cis-3-enoyl-CoA as substrate. This Acinetobacter baylyi (strain ATCC 33305 / BD413 / ADP1) protein is Fatty acid oxidation complex subunit alpha.